An 880-amino-acid polypeptide reads, in one-letter code: Zinc-responsive transcriptional regulator ZAP1 (880 aa).

2 disordered regions span residues 1–26 (MDAL…AASA) and 140–164 (NNFH…PRRK). Residues 17-26 (ATSAATAASA) show a composition bias toward low complexity. A compositionally biased stretch (polar residues) spans 147–158 (SDPTSPQQNSKS). A phosphoserine mark is found at Ser156 and Ser166. The interval 182–502 (KPNPPPGSDD…LTNNDLNDLI (321 aa)) is zinc-responsive domain 1 (ZRD(AD1)). The tract at residues 207 to 402 (HPKSEANIKQ…YEVPFGKHIN (196 aa)) is transcription activation domain 1 (AD1). Disordered stretches follow at residues 436-482 (NRCN…VNNS) and 510-555 (RFRN…PSSI). Positions 442–456 (NNLNGSNNNTAGATS) are enriched in low complexity. Over residues 460–474 (QHHHHRIQFHSHKPN) the composition is skewed to basic residues. Ser515 is subject to Phosphoserine. Positions 545-555 (SSLEDSLPSSI) are enriched in low complexity. The C2H2-type 1 zinc-finger motif lies at 579–604 (LKCKWKECPESCSSLFDLQRHLLKDH). Positions 579 to 641 (LKCKWKECPE…SIVNHINCQH (63 aa)) are zinc-responsive domain 2 (ZRD(AD2)). Residues Cys581, Cys586, His599, His604, Cys618, Cys623, His636, and His641 each coordinate Zn(2+). Residues 611–640 (HPMEPLACNWEDCDFLGDDTCSIVNHINCQ) are transcription activation domain 2 (AD2). The C2H2-type 2; atypical zinc finger occupies 616–641 (LACNWEDCDFLGDDTCSIVNHINCQH). 5 C2H2-type zinc fingers span residues 705–730 (VICQ…EAVH), 738–762 (YQCL…LKVH), 768–790 (YKCK…TRTH), 796–818 (YKCH…IRTH), and 824–846 (LQCK…IKTH). The segment at residues 705 to 846 (VICQWDGCNK…SNLSKHIKTH (142 aa)) is a DNA-binding region (DNA-binding domain).

Its subcellular location is the nucleus. Active in zinc-limited cells and repressed in replete cells. Zinc controls ZAP1 DNA binding activity. Transcription regulator controlling zinc-responsive gene expression. Binds to zinc-responsive elements (ZREs) (consensus sequence 5'-ACCYYNAAGGT-3') in the promoter of target genes. Recruits SWI/SNF, SAGA, and Mediator complexes as coactivators in a zinc-responsive manner. Involved in zinc ion homeostasis by zinc-responsive transcriptional regulation of the zinc uptake system genes ZTR1 and ZTR2. Positively regulates ETR1 expression, affecting mitochondrial function. This is Zinc-responsive transcriptional regulator ZAP1 (ZAP1) from Saccharomyces cerevisiae (strain ATCC 204508 / S288c) (Baker's yeast).